The following is a 596-amino-acid chain: uncharacterized protein (596 aa).

Residues 44-203 enclose the Helicase ATP-binding domain; sequence KYLASQPRDF…PFVTYALDAD (160 aa). The Helicase C-terminal domain maps to 285–432; it reads RLRQLRTHVP…PHRESTDNPL (148 aa). 2 disordered regions span residues 420–444 and 506–533; these read LGKP…QTEQ and EQLQ…SVHG. Polar residues predominate over residues 510 to 523; that stretch reads KRTAAQQASSTPDR.

This sequence to M.tuberculosis Rv2917.

This is an uncharacterized protein from Mycobacterium leprae (strain TN).